A 396-amino-acid chain; its full sequence is RNA polymerase principal sigma factor HrdA (396 aa).

A compositionally biased stretch (basic residues) spans 1-20 (MRGGQRRASRLRPPTYRRRP). The disordered stretch occupies residues 1–96 (MRGGQRRASR…PTRTESGGPS (96 aa)). Low complexity-rich tracts occupy residues 33–42 (QTQTLTQTDT) and 56–75 (LLAM…PGAP). The short motif at 187–200 (DLVQEGNLGLIRAV) is the Polymerase core binding element. A DNA-binding region (H-T-H motif) is located at residues 357 to 376 (LEEIGRLFGVTRERIRQIES).

Belongs to the sigma-70 factor family. As to quaternary structure, interacts transiently with the RNA polymerase catalytic core. Interacts with RNA polymerase-binding protein RbpA.

In terms of biological role, sigma factors are initiation factors that promote the attachment of RNA polymerase to specific initiation sites and are then released. The sequence is that of RNA polymerase principal sigma factor HrdA (hrdA) from Streptomyces coelicolor (strain ATCC BAA-471 / A3(2) / M145).